The sequence spans 483 residues: Serralysin (483 aa).

His-184 contacts Zn(2+). Glu-185 is a catalytic residue. Residues His-188 and His-194 each coordinate Zn(2+). 8 residues coordinate Ca(2+): Arg-263, Asp-266, Asp-295, Gly-297, Gly-298, Asp-300, Thr-337, and Glu-339. Hemolysin-type calcium-binding repeat units follow at residues 342 to 359 (IGGSGNDILIGNDAENIL) and 360 to 377 (KGGAGDDIIYGGLGADQL).

Belongs to the peptidase M10B family. It depends on Zn(2+) as a cofactor. Ca(2+) is required as a cofactor.

It is found in the secreted. It catalyses the reaction Preferential cleavage of bonds with hydrophobic residues in P1'.. Its activity is regulated as follows. Inhibited by 8 mM 1,10-phenanthroline and 10 mM EDTA, but not by PMSF. Its function is as follows. Involved in the inhibition of insect antibacterial peptides. Reduces the antibacterial activity of G.mellonella hemolymph by 50%. Reduces the antibacterial activity of cecropin A by 80% and cecropin B by 75%. This Photorhabdus sp. (strain Az29) protein is Serralysin.